We begin with the raw amino-acid sequence, 156 residues long: Ribosome-binding factor A (156 aa).

Positions 129-156 (AGEAQPYRVEEEPGDSEDETPPSSQDQR) are disordered.

Belongs to the RbfA family. In terms of assembly, monomer. Binds 30S ribosomal subunits, but not 50S ribosomal subunits or 70S ribosomes.

Its subcellular location is the cytoplasm. In terms of biological role, one of several proteins that assist in the late maturation steps of the functional core of the 30S ribosomal subunit. Associates with free 30S ribosomal subunits (but not with 30S subunits that are part of 70S ribosomes or polysomes). Required for efficient processing of 16S rRNA. May interact with the 5'-terminal helix region of 16S rRNA. The protein is Ribosome-binding factor A of Salinispora arenicola (strain CNS-205).